The following is a 467-amino-acid chain: Argininosuccinate lyase (467 aa).

Belongs to the lyase 1 family. Argininosuccinate lyase subfamily.

Its subcellular location is the cytoplasm. It carries out the reaction 2-(N(omega)-L-arginino)succinate = fumarate + L-arginine. Its pathway is amino-acid biosynthesis; L-arginine biosynthesis; L-arginine from L-ornithine and carbamoyl phosphate: step 3/3. In Nitrosococcus oceani (strain ATCC 19707 / BCRC 17464 / JCM 30415 / NCIMB 11848 / C-107), this protein is Argininosuccinate lyase.